Here is a 321-residue protein sequence, read N- to C-terminus: Ribonucleoside-diphosphate reductase small subunit (321 aa).

Fe cation is bound by residues D78, E108, and H111. Y115 is a catalytic residue. Residues 165–185 (ILMILIEGLFFASSFASIAYL) traverse the membrane as a helical segment. Residues E171, E205, and H208 each contribute to the Fe cation site.

The protein belongs to the ribonucleoside diphosphate reductase small chain family. In terms of assembly, heterotetramer composed of a homodimer of the large subunit (R1) and a homodimer of the small subunit (R2). Larger multisubunit protein complex are also active, composed of (R1)n(R2)n. Fe cation is required as a cofactor.

It is found in the host membrane. It catalyses the reaction a 2'-deoxyribonucleoside 5'-diphosphate + [thioredoxin]-disulfide + H2O = a ribonucleoside 5'-diphosphate + [thioredoxin]-dithiol. Its function is as follows. Ribonucleoside-diphosphate reductase holoenzyme provides the precursors necessary for viral DNA synthesis. Allows virus growth in non-dividing cells, as well as reactivation from latency in infected hosts. Catalyzes the biosynthesis of deoxyribonucleotides from the corresponding ribonucleotides. The protein is Ribonucleoside-diphosphate reductase small subunit of Equus caballus (Horse).